The sequence spans 204 residues: MAAVTNADVEAVDFDPDDDDLMDEDAADPTPAPAPRLRSTIAGGGGGGGGGDDGQRKTKGRGFRDDAAPRDSRLAGAGRASDFDSLGSDGGPGPVRSIEGWIVLVTGVHEEAQEDDLHNIFRDFGQVKNLHLNLDRRTGFVKGYALIEYETFEEAQAAIKALDGTELLTQIISVDWAFSNGPVKRRNIRKRSPRRSRSPPRRRY.

A disordered region spans residues 1–92; it reads MAAVTNADVE…FDSLGSDGGP (92 aa). Over residues 10–27 the composition is skewed to acidic residues; sequence EAVDFDPDDDDLMDEDAA. Gly residues predominate over residues 42–52; sequence AGGGGGGGGGD. Residues 62–73 show a composition bias toward basic and acidic residues; the sequence is GFRDDAAPRDSR. The 79-residue stretch at 101–179 folds into the RRM domain; it reads WIVLVTGVHE…QIISVDWAFS (79 aa).

This sequence belongs to the RBM8A family. In terms of assembly, heterodimer with MAGO1. Heterodimer with MAGO2. Part of the mRNA splicing-dependent exon junction complex (EJC); the core complex contains MLN51/CASC3, EIF4A3, MAGO and Y14.

The protein localises to the nucleus. Its subcellular location is the cytoplasm. Functionally, core component of the splicing-dependent multiprotein exon junction complex (EJC) deposited at splice junctions on mRNAs. The EJC is a dynamic structure consisting of core proteins and several peripheral nuclear and cytoplasmic associated factors that join the complex only transiently either during EJC assembly or during subsequent mRNA metabolism. The EJC marks the position of the exon-exon junction in the mature mRNA for the gene expression machinery and the core components remain bound to spliced mRNAs throughout all stages of mRNA metabolism thereby influencing downstream processes including nuclear mRNA export, subcellular mRNA localization, translation efficiency and nonsense-mediated mRNA decay (NMD). The MAGO-Y14 heterodimer inhibits the ATPase activity of EIF4A3, thereby trapping the ATP-bound EJC core onto spliced mRNA in a stable conformation. The MAGO-Y14 heterodimer interacts with the EJC key regulator PYM leading to EJC disassembly in the cytoplasm. EJC core heterodimers play essential roles in plant growth and development, and pollen and seed development. The MAGO-Y14 heterodimer selectively binds to the UDT1 (UNDEVELOPED TAPETUM 1) pre-mRNA transcript and regulates the splicing of UDT1, a key regulator in stamen development. The polypeptide is RNA-binding protein Y14A (Oryza sativa subsp. japonica (Rice)).